Consider the following 263-residue polypeptide: Phosphatidylglycerol--prolipoprotein diacylglyceryl transferase (263 aa).

Transmembrane regions (helical) follow at residues 6-26 (VIFSIGPVSIYWYSLAYVLGI), 50-70 (LLTAVIIGIILGGRLGYVLIY), 85-105 (TWEGGMSFHGGAIGVLLAVII), and 112-132 (IPIFYTLDLISCGVPIGLLLG). Position 133 (arginine 133) interacts with a 1,2-diacyl-sn-glycero-3-phospho-(1'-sn-glycerol). The next 3 membrane-spanning stretches (helical) occupy residues 169 to 189 (LYEAFFEGALLFVVVNSLFYL), 197 to 217 (GATTGVAVMLYGVARFMVEFF), and 233 to 253 (MGQLLSIPMILLGMLIYLGAL).

Belongs to the Lgt family.

The protein resides in the cell membrane. It catalyses the reaction L-cysteinyl-[prolipoprotein] + a 1,2-diacyl-sn-glycero-3-phospho-(1'-sn-glycerol) = an S-1,2-diacyl-sn-glyceryl-L-cysteinyl-[prolipoprotein] + sn-glycerol 1-phosphate + H(+). It participates in protein modification; lipoprotein biosynthesis (diacylglyceryl transfer). Functionally, catalyzes the transfer of the diacylglyceryl group from phosphatidylglycerol to the sulfhydryl group of the N-terminal cysteine of a prolipoprotein, the first step in the formation of mature lipoproteins. The sequence is that of Phosphatidylglycerol--prolipoprotein diacylglyceryl transferase from Wolbachia pipientis subsp. Culex pipiens (strain wPip).